A 275-amino-acid chain; its full sequence is Small ribosomal subunit protein uS2 (275 aa).

Positions 232-256 (ARATDGKPEPEPVPGQELGADEPLA) are disordered.

Belongs to the universal ribosomal protein uS2 family.

The chain is Small ribosomal subunit protein uS2 from Acidothermus cellulolyticus (strain ATCC 43068 / DSM 8971 / 11B).